A 1074-amino-acid polypeptide reads, in one-letter code: Fibrous sheath CABYR-binding protein (1074 aa).

Residues methionine 1–tyrosine 73 are disordered. Residues serine 25, serine 57, serine 186, and serine 275 each carry the phosphoserine modification. 2 disordered regions span residues glutamine 272 to valine 294 and leucine 317 to proline 343. The segment covering proline 274–alanine 290 has biased composition (low complexity). At serine 365 the chain carries Phosphoserine. Disordered regions lie at residues valine 437 to serine 789 and glycine 818 to threonine 982. Low complexity predominate over residues proline 448 to serine 467. Residues valine 528 to leucine 544 show a composition bias toward pro residues. Over residues glutamate 558–glutamate 575 the composition is skewed to low complexity. Pro residues-rich tracts occupy residues phenylalanine 576–leucine 592 and proline 673–alanine 688. The span at threonine 689–valine 720 shows a compositional bias: low complexity. Phosphoserine is present on serine 1020. The tract at residues serine 1026–threonine 1054 is disordered.

As to quaternary structure, interacts with CABYR. Interacts with ROPN1 and ROPN1L; the interaction increases upon spermatozoa capacitation conditions. Phosphorylated by PKA upon spermatozoa capacitation conditions. In terms of tissue distribution, expression is restricted to testis and epididymis, expressed by spermatozoa.

It is found in the cell projection. It localises to the cilium. The protein localises to the flagellum. In terms of biological role, may be involved in the later stages of fibrous sheath biogenesis and spermatozoa capacitation. Inhibits ROPN1 and ROPN1L SUMOylation. Binds calcium. This chain is Fibrous sheath CABYR-binding protein, found in Mus musculus (Mouse).